Consider the following 204-residue polypeptide: dCTP deaminase, dUMP-forming (204 aa).

Residues 117-122 (RSSLGR), His128, Gly132, Asp135, 143-145 (TLE), Gln163, Tyr177, Lys184, and Gln188 contribute to the dCTP site. The active-site Proton donor/acceptor is the Glu145.

As to quaternary structure, homotrimer. Two trimers assemble into a hexamer by stacking on top of each other. Mg(2+) serves as cofactor.

It carries out the reaction dCTP + 2 H2O = dUMP + NH4(+) + diphosphate. It participates in pyrimidine metabolism; dUMP biosynthesis; dUMP from dCTP: step 1/1. With respect to regulation, inhibited by dTTP. In terms of biological role, bifunctional enzyme that catalyzes both the deamination of dCTP to dUTP and the hydrolysis of dUTP to dUMP without releasing the toxic dUTP intermediate. It also acts as a dUTP diphosphatase with a lower affinity for dUTP than for dCTP. This is dCTP deaminase, dUMP-forming from Methanocaldococcus jannaschii (strain ATCC 43067 / DSM 2661 / JAL-1 / JCM 10045 / NBRC 100440) (Methanococcus jannaschii).